The chain runs to 275 residues: Formamidopyrimidine-DNA glycosylase (275 aa).

P2 serves as the catalytic Schiff-base intermediate with DNA. The active-site Proton donor is E3. The active-site Proton donor; for beta-elimination activity is the K58. Residues H93, R111, and R156 each contribute to the DNA site. The FPG-type zinc finger occupies 241 to 275 (FVYDRAGEPCRVCGTPIRQIVQGQRSTYFCPTCQR). Catalysis depends on R265, which acts as the Proton donor; for delta-elimination activity.

The protein belongs to the FPG family. Monomer. Zn(2+) serves as cofactor.

It catalyses the reaction Hydrolysis of DNA containing ring-opened 7-methylguanine residues, releasing 2,6-diamino-4-hydroxy-5-(N-methyl)formamidopyrimidine.. The catalysed reaction is 2'-deoxyribonucleotide-(2'-deoxyribose 5'-phosphate)-2'-deoxyribonucleotide-DNA = a 3'-end 2'-deoxyribonucleotide-(2,3-dehydro-2,3-deoxyribose 5'-phosphate)-DNA + a 5'-end 5'-phospho-2'-deoxyribonucleoside-DNA + H(+). In terms of biological role, involved in base excision repair of DNA damaged by oxidation or by mutagenic agents. Acts as a DNA glycosylase that recognizes and removes damaged bases. Has a preference for oxidized purines, such as 7,8-dihydro-8-oxoguanine (8-oxoG). Has AP (apurinic/apyrimidinic) lyase activity and introduces nicks in the DNA strand. Cleaves the DNA backbone by beta-delta elimination to generate a single-strand break at the site of the removed base with both 3'- and 5'-phosphates. The chain is Formamidopyrimidine-DNA glycosylase from Burkholderia multivorans (strain ATCC 17616 / 249).